Consider the following 166-residue polypeptide: Phospholipase A2 inhibitor clone 05 (166 aa).

The signal sequence occupies residues 1–19 (MRLILLSSLLLLGIFLADG). Residues 46-161 (LKGAFLTVHR…CDDNLLVVCE (116 aa)) form the C-type lectin domain. 2 disulfides stabilise this stretch: Cys-83–Cys-160 and Cys-138–Cys-152. The N-linked (GlcNAc...) asparagine glycan is linked to Asn-122.

This sequence belongs to the alpha-type phospholipase A2 inhibitor family. Homotrimer; non-covalently linked. In terms of tissue distribution, expressed by the liver.

Its subcellular location is the secreted. This phospholipase A2 inhibitor binds directly phospholipase A2 in the presence or absence of calcium. This chain is Phospholipase A2 inhibitor clone 05, found in Bothrops moojeni (Lance-headed viper).